The chain runs to 439 residues: Elongation factor Tu, mitochondrial (439 aa).

A tr-type G domain is found at 51-246 (KPHVNIGTIG…AVDSYITLPE (196 aa)). The tract at residues 60–67 (GHVDHGKT) is G1. 60–67 (GHVDHGKT) serves as a coordination point for GTP. Residues 101 to 105 (GITIS) are G2. A G3 region spans residues 122–125 (DCPG). Residues 122–126 (DCPGH) and 177–180 (NKVD) contribute to the GTP site. The tract at residues 177–180 (NKVD) is G4. Residues 214-216 (SAL) form a G5 region.

Belongs to the TRAFAC class translation factor GTPase superfamily. Classic translation factor GTPase family. EF-Tu/EF-1A subfamily.

Its subcellular location is the mitochondrion. Functionally, this protein promotes the GTP-dependent binding of aminoacyl-tRNA to the A-site of ribosomes during protein biosynthesis. The polypeptide is Elongation factor Tu, mitochondrial (tuf1) (Schizosaccharomyces pombe (strain 972 / ATCC 24843) (Fission yeast)).